Consider the following 246-residue polypeptide: 23S rRNA (guanosine-2'-O-)-methyltransferase RlmB (246 aa).

S-adenosyl-L-methionine contacts are provided by G196, I216, and L225.

Belongs to the class IV-like SAM-binding methyltransferase superfamily. RNA methyltransferase TrmH family. RlmB subfamily. Homodimer.

The protein localises to the cytoplasm. The catalysed reaction is guanosine(2251) in 23S rRNA + S-adenosyl-L-methionine = 2'-O-methylguanosine(2251) in 23S rRNA + S-adenosyl-L-homocysteine + H(+). Specifically methylates the ribose of guanosine 2251 in 23S rRNA. The protein is 23S rRNA (guanosine-2'-O-)-methyltransferase RlmB of Yersinia pestis.